The primary structure comprises 390 residues: Protein dimmed (390 aa).

A disordered region spans residues 24–163 (HNNNNYNTDG…RNMRRLESNE (140 aa)). Polar residues-rich tracts occupy residues 29-44 (YNTDGHNGLSSESAEG) and 55-64 (RTSQLSNNTY). The N-linked (GlcNAc...) asparagine glycan is linked to Asn-61. Positions 69–78 (TDSSSQSDDT) are enriched in low complexity. Gly residues predominate over residues 79 to 90 (SGGGGSSNGGGS). The span at 122-141 (PSTIAPNSTSSNSSNANGNA) shows a compositional bias: low complexity. N-linked (GlcNAc...) asparagine glycans are attached at residues Asn-128, Asn-133, and Asn-140. Positions 151–163 (AKERNMRRLESNE) are enriched in basic and acidic residues. The bHLH domain maps to 156 to 208 (MRRLESNERERMRMHSLNDAFQSLREVIPHVEMERRLSKIETLTLAKNYIINL). Residues Asn-207 and Asn-237 are each glycosylated (N-linked (GlcNAc...) asparagine). The interval 312–339 (QQQQASHLPHHQQAMHGHGHLGASIQSQ) is disordered. An N-linked (GlcNAc...) asparagine glycan is attached at Asn-347.

In terms of assembly, forms homodimers via the bHLH domain. These dimers bind the core E-box sequence. As to expression, detected in the developing nervous system in the bilateral domains in the cephalic region that later on forms part of the ring gland. Concomitantly expressed in the larval central nervous system (CNS), including the dorsal chain neurons as well as several bilateral clusters of neurons: large, midline protocerebral brain cells (MC), lateral protocerebral brain cells (LC), ventral subesophageal neurons (SE) and lateral abdominal neurons, and the transverse nerves. Outside the CNS, detected in at least three classes of endocrine cells: intrinsic cells of the corpora cardiaca, midgut cells, the Inka cells, lateral Bipolar neurons associated with the segmental transverse nerve, and several peptidergic cells of the enteric nervous system. Expressed only in central and peripheral neuroendocrine secretory cells and neurosecretory neurons but not in sensory or motor neurons.

It localises to the cytoplasm. In terms of biological role, transcription factor that regulates neurosecretory (NS) cell function and neuroendocrine cell fate. Acts as a master regulator of common NS functions such as Phm expression and neuropeptide production. Plays a role as a regulator of peptide-containing large dense-core vesicle (LDCV) production and peptidergic cell differentiation. Controls transcription of FMRFamide in Tv neuronal cells and Fur1 in Ap-let cells (Tvb and dorsal apterous cells). Also required for up-regulation of Phm in Tv and Ap-let cells, and expression of three neuropeptide genes, Ms, FMRFamide and Lk. Influences both regulated and constitutive secretory activity in neuroendocrine cells at embryonic and postembryonic level. Loss of function studies show reduced cellular levels of various neuropeptides and neuropeptide biosynthetic enzymes. The sequence is that of Protein dimmed (dimm) from Drosophila melanogaster (Fruit fly).